The chain runs to 117 residues: G antigen 12I (117 aa).

The tract at residues 1–117 (MSWRGRSTYY…PEEGEKQSQC (117 aa)) is disordered. 2 stretches are compositionally biased toward acidic residues: residues 32–45 (FSDE…EEGE) and 87–96 (ECEDGPDGQE). The span at 103–117 (EEVKTPEEGEKQSQC) shows a compositional bias: basic and acidic residues.

Belongs to the GAGE family. Forms tetramers.

This Homo sapiens (Human) protein is G antigen 12I (GAGE12I).